A 336-amino-acid polypeptide reads, in one-letter code: Glyceraldehyde-3-phosphate dehydrogenase (336 aa).

NAD(+) contacts are provided by residues 12 to 13, D34, R78, and T121; that span reads RI. Residues 151–153, T182, R199, 212–213, and R235 contribute to the D-glyceraldehyde 3-phosphate site; these read SCT and TG. C152 (nucleophile) is an active-site residue. Residue N316 participates in NAD(+) binding.

This sequence belongs to the glyceraldehyde-3-phosphate dehydrogenase family. In terms of assembly, homotetramer.

The protein localises to the cytoplasm. The catalysed reaction is D-glyceraldehyde 3-phosphate + phosphate + NAD(+) = (2R)-3-phospho-glyceroyl phosphate + NADH + H(+). The protein operates within carbohydrate degradation; glycolysis; pyruvate from D-glyceraldehyde 3-phosphate: step 1/5. Its function is as follows. Catalyzes the oxidative phosphorylation of glyceraldehyde 3-phosphate (G3P) to 1,3-bisphosphoglycerate (BPG) using the cofactor NAD. The first reaction step involves the formation of a hemiacetal intermediate between G3P and a cysteine residue, and this hemiacetal intermediate is then oxidized to a thioester, with concomitant reduction of NAD to NADH. The reduced NADH is then exchanged with the second NAD, and the thioester is attacked by a nucleophilic inorganic phosphate to produce BPG. This Streptococcus pyogenes serotype M3 (strain ATCC BAA-595 / MGAS315) protein is Glyceraldehyde-3-phosphate dehydrogenase (gap).